The sequence spans 224 residues: MANNLVQLIFDQFIEILEDLAAKDEWCFDFNKCDFDFRVRELVNHRLLDVKYTIKDECGRPRDVIQEIDITGICYEDLTTCKWVDYLTKLAVEYINNICPPRYIIIKEEPKKCRPQLPEWNPFPCKRTTTIYRRQKPVEKKPECEVIFEKGCECLPSCEREVPVPKEQIFIKYEPVPAKCCERTVLVRSPEQNRHSFGVHKGNIDYNNHVWPKCCQSKKCNCAH.

The protein localises to the virion. This is an uncharacterized protein from Acanthamoeba polyphaga mimivirus (APMV).